Consider the following 363-residue polypeptide: GDP-fucose transporter 1 (363 aa).

Transmembrane regions (helical) follow at residues 33 to 55 (FLLRALQIALVVSLYWVTSISMV), 75 to 97 (VTFYQCLVTSLLCKGLSTLATCC), 110 to 129 (LKVARSVLPLSVVFIGMITF), 139 to 161 (VPFYNVGRSLTTVFNVLLSYLLL), 166 to 184 (SFYALLTCGVIIGGFWLGI), 194 to 213 (SLTGTIFGVLASLCVSLNAI), 226 to 248 (IWRLTFYNNVNACVLFLPLMIVL), and 263 to 285 (AHFWLMMTLGGLFGFAIGYVTGL).

This sequence belongs to the TPT transporter family. SLC35C subfamily.

Its subcellular location is the golgi apparatus membrane. It catalyses the reaction GMP(out) + GDP-beta-L-fucose(in) = GMP(in) + GDP-beta-L-fucose(out). Its function is as follows. Antiporter specific for GDP-l-fucose and depending on the concomitant reverse transport of GMP. Involved in GDP-fucose import from the cytoplasm into the Golgi lumen. This Mus musculus (Mouse) protein is GDP-fucose transporter 1 (Slc35c1).